Consider the following 85-residue polypeptide: Contulakin-Lt2 (85 aa).

Positions 1-22 (MQMAYWVMVMMMVGITAPLSEG) are cleaved as a signal peptide. Positions 23 to 61 (RKLNDAIRGLVPNDLTPQLLQSLVSRRHRVFHLDNTYLK) are excised as a propeptide. Cys-65 and Cys-70 form a disulfide bridge. Residues 76 to 85 (RRRDLKKRNK) constitute a propeptide that is removed on maturation.

This sequence belongs to the conotoxin C superfamily. In terms of tissue distribution, expressed by the venom duct.

The protein localises to the secreted. In terms of biological role, acts as an agonist of neurotensin receptors. It binds to human neurotensin type 1 receptor (NTSR1), rat neurotensin types 1 and 2 receptors (NTSR1/NTSR2) and mouse neurotensin type 3 receptor (SORT1). The protein is Contulakin-Lt2 of Conus litteratus (Lettered cone).